The following is a 226-amino-acid chain: ATP-dependent dethiobiotin synthetase BioD (226 aa).

12–17 (GVGKTV) contacts ATP. Thr-16 provides a ligand contact to Mg(2+). Lys-37 is a catalytic residue. Position 41 (Thr-41) interacts with substrate. ATP-binding positions include Asp-49, 108 to 111 (EGAG), 169 to 170 (GS), and 197 to 199 (PAG). 2 residues coordinate Mg(2+): Asp-49 and Glu-108.

Belongs to the dethiobiotin synthetase family. Homodimer. Mg(2+) is required as a cofactor.

The protein localises to the cytoplasm. It carries out the reaction (7R,8S)-7,8-diammoniononanoate + CO2 + ATP = (4R,5S)-dethiobiotin + ADP + phosphate + 3 H(+). Its pathway is cofactor biosynthesis; biotin biosynthesis; biotin from 7,8-diaminononanoate: step 1/2. Catalyzes a mechanistically unusual reaction, the ATP-dependent insertion of CO2 between the N7 and N8 nitrogen atoms of 7,8-diaminopelargonic acid (DAPA, also called 7,8-diammoniononanoate) to form a ureido ring. This chain is ATP-dependent dethiobiotin synthetase BioD, found in Mycobacterium bovis (strain ATCC BAA-935 / AF2122/97).